Consider the following 749-residue polypeptide: 5-methyltetrahydropteroyltriglutamate--homocysteine methyltransferase (749 aa).

5-methyltetrahydropteroyltri-L-glutamate contacts are provided by residues 15 to 18 (RELK) and K114. Residues 425-427 (IGS) and E478 each bind L-homocysteine. L-methionine is bound by residues 425–427 (IGS) and E478. Residue W555 coordinates 5-methyltetrahydropteroyltri-L-glutamate. D593 is an L-homocysteine binding site. D593 lines the L-methionine pocket. Residue E599 coordinates 5-methyltetrahydropteroyltri-L-glutamate. Positions 636, 638, and 660 each coordinate Zn(2+). The active-site Proton donor is the H689. A Zn(2+)-binding site is contributed by C721.

Belongs to the vitamin-B12 independent methionine synthase family. Zn(2+) serves as cofactor.

It carries out the reaction 5-methyltetrahydropteroyltri-L-glutamate + L-homocysteine = tetrahydropteroyltri-L-glutamate + L-methionine. The protein operates within amino-acid biosynthesis; L-methionine biosynthesis via de novo pathway; L-methionine from L-homocysteine (MetE route): step 1/1. Catalyzes the transfer of a methyl group from 5-methyltetrahydrofolate to homocysteine resulting in methionine formation. This chain is 5-methyltetrahydropteroyltriglutamate--homocysteine methyltransferase, found in Streptococcus thermophilus (strain ATCC BAA-491 / LMD-9).